The following is a 1299-amino-acid chain: DNA-directed RNA polymerase subunit beta' (1299 aa).

The Zn(2+) site is built by Cys-60, Cys-62, Cys-75, and Cys-78. 3 residues coordinate Mg(2+): Asp-535, Asp-537, and Asp-539. Positions 877, 954, 961, and 964 each coordinate Zn(2+).

It belongs to the RNA polymerase beta' chain family. As to quaternary structure, the RNAP catalytic core consists of 2 alpha, 1 beta, 1 beta' and 1 omega subunit. When a sigma factor is associated with the core the holoenzyme is formed, which can initiate transcription. The cofactor is Mg(2+). Requires Zn(2+) as cofactor.

It carries out the reaction RNA(n) + a ribonucleoside 5'-triphosphate = RNA(n+1) + diphosphate. In terms of biological role, DNA-dependent RNA polymerase catalyzes the transcription of DNA into RNA using the four ribonucleoside triphosphates as substrates. The protein is DNA-directed RNA polymerase subunit beta' of Renibacterium salmoninarum (strain ATCC 33209 / DSM 20767 / JCM 11484 / NBRC 15589 / NCIMB 2235).